We begin with the raw amino-acid sequence, 621 residues long: Chaperone protein HtpG (621 aa).

The tract at residues 1-341 (MSNQEYTFQT…SEDLPLNVSR (341 aa)) is a; substrate-binding. The interval 342–547 (EILQQNKILA…GDEQNAMMAN (206 aa)) is b. The c stretch occupies residues 548-621 (WMRQMGQSVP…RLNSVLLKAL (74 aa)).

The protein belongs to the heat shock protein 90 family. Homodimer.

It is found in the cytoplasm. Functionally, molecular chaperone. Has ATPase activity. The chain is Chaperone protein HtpG from Helicobacter pylori (strain ATCC 700392 / 26695) (Campylobacter pylori).